The following is a 453-amino-acid chain: Allantoinase (453 aa).

Residues His59, His61, Lys146, His186, His242, and Asp315 each contribute to the Zn(2+) site. Lys146 is subject to N6-carboxylysine.

The protein belongs to the metallo-dependent hydrolases superfamily. Allantoinase family. Homotetramer. The cofactor is Zn(2+). In terms of processing, carboxylation allows a single lysine to coordinate two zinc ions.

The catalysed reaction is (S)-allantoin + H2O = allantoate + H(+). The protein operates within nitrogen metabolism; (S)-allantoin degradation; allantoate from (S)-allantoin: step 1/1. Catalyzes the conversion of allantoin (5-ureidohydantoin) to allantoic acid by hydrolytic cleavage of the five-member hydantoin ring. The chain is Allantoinase from Escherichia coli O9:H4 (strain HS).